The primary structure comprises 208 residues: ATP phosphoribosyltransferase (208 aa).

Belongs to the ATP phosphoribosyltransferase family. Short subfamily. In terms of assembly, heteromultimer composed of HisG and HisZ subunits.

The protein resides in the cytoplasm. It carries out the reaction 1-(5-phospho-beta-D-ribosyl)-ATP + diphosphate = 5-phospho-alpha-D-ribose 1-diphosphate + ATP. It functions in the pathway amino-acid biosynthesis; L-histidine biosynthesis; L-histidine from 5-phospho-alpha-D-ribose 1-diphosphate: step 1/9. In terms of biological role, catalyzes the condensation of ATP and 5-phosphoribose 1-diphosphate to form N'-(5'-phosphoribosyl)-ATP (PR-ATP). Has a crucial role in the pathway because the rate of histidine biosynthesis seems to be controlled primarily by regulation of HisG enzymatic activity. The sequence is that of ATP phosphoribosyltransferase from Lactococcus lactis subsp. cremoris (strain MG1363).